The chain runs to 163 residues: Glutathione peroxidase 2 (163 aa).

Residue cysteine 36 is part of the active site.

This sequence belongs to the glutathione peroxidase family.

It is found in the cytoplasm. The catalysed reaction is 2 glutathione + H2O2 = glutathione disulfide + 2 H2O. In terms of biological role, may constitute a glutathione peroxidase-like protective system against oxidative stresses. The polypeptide is Glutathione peroxidase 2 (gpx-2) (Caenorhabditis elegans).